The following is a 545-amino-acid chain: Chaperonin GroEL (545 aa).

Residues 30–33 (TMGP), K51, 87–91 (DGTTT), G416, 479–481 (NAA), and D495 contribute to the ATP site.

It belongs to the chaperonin (HSP60) family. As to quaternary structure, forms a cylinder of 14 subunits composed of two heptameric rings stacked back-to-back. Interacts with the co-chaperonin GroES.

Its subcellular location is the cytoplasm. The catalysed reaction is ATP + H2O + a folded polypeptide = ADP + phosphate + an unfolded polypeptide.. In terms of biological role, together with its co-chaperonin GroES, plays an essential role in assisting protein folding. The GroEL-GroES system forms a nano-cage that allows encapsulation of the non-native substrate proteins and provides a physical environment optimized to promote and accelerate protein folding. The polypeptide is Chaperonin GroEL (Nautilia profundicola (strain ATCC BAA-1463 / DSM 18972 / AmH)).